Here is a 300-residue protein sequence, read N- to C-terminus: Porphobilinogen deaminase (300 aa).

Cys-239 carries the S-(dipyrrolylmethanemethyl)cysteine modification.

Belongs to the HMBS family. As to quaternary structure, monomer. Requires dipyrromethane as cofactor.

It carries out the reaction 4 porphobilinogen + H2O = hydroxymethylbilane + 4 NH4(+). It functions in the pathway porphyrin-containing compound metabolism; protoporphyrin-IX biosynthesis; coproporphyrinogen-III from 5-aminolevulinate: step 2/4. Tetrapolymerization of the monopyrrole PBG into the hydroxymethylbilane pre-uroporphyrinogen in several discrete steps. The polypeptide is Porphobilinogen deaminase (Francisella tularensis subsp. tularensis (strain FSC 198)).